The chain runs to 360 residues: DNA replication and repair protein RecF (360 aa).

33-40 contributes to the ATP binding site; sequence GENGSGKT.

Belongs to the RecF family.

It is found in the cytoplasm. Its function is as follows. The RecF protein is involved in DNA metabolism; it is required for DNA replication and normal SOS inducibility. RecF binds preferentially to single-stranded, linear DNA. It also seems to bind ATP. This is DNA replication and repair protein RecF from Rickettsia canadensis (strain McKiel).